The chain runs to 196 residues: Holliday junction branch migration complex subunit RuvA (196 aa).

The segment at 1–63 is domain I; sequence MINKIYGKIV…DDDVKLFGFL (63 aa). The segment at 64-142 is domain II; sequence NISEREVFEN…KGDESSSYML (79 aa). Lysine 143 is a region of interest (flexible linker). The interval 143-196 is domain III; sequence KFKELEQSIVNMGFDRKLVVVAFREIMLSDKFLILKEAEQEQFLFTETLKRLSV.

Belongs to the RuvA family. Homotetramer. Forms an RuvA(8)-RuvB(12)-Holliday junction (HJ) complex. HJ DNA is sandwiched between 2 RuvA tetramers; dsDNA enters through RuvA and exits via RuvB. An RuvB hexamer assembles on each DNA strand where it exits the tetramer. Each RuvB hexamer is contacted by two RuvA subunits (via domain III) on 2 adjacent RuvB subunits; this complex drives branch migration. In the full resolvosome a probable DNA-RuvA(4)-RuvB(12)-RuvC(2) complex forms which resolves the HJ.

It is found in the cytoplasm. Its function is as follows. The RuvA-RuvB-RuvC complex processes Holliday junction (HJ) DNA during genetic recombination and DNA repair, while the RuvA-RuvB complex plays an important role in the rescue of blocked DNA replication forks via replication fork reversal (RFR). RuvA specifically binds to HJ cruciform DNA, conferring on it an open structure. The RuvB hexamer acts as an ATP-dependent pump, pulling dsDNA into and through the RuvAB complex. HJ branch migration allows RuvC to scan DNA until it finds its consensus sequence, where it cleaves and resolves the cruciform DNA. The protein is Holliday junction branch migration complex subunit RuvA of Borrelia recurrentis (strain A1).